A 247-amino-acid chain; its full sequence is UPF0259 membrane protein BUAPTUC7_273 (247 aa).

6 helical membrane passes run 20 to 40 (IGAI…IDMF), 85 to 105 (IMES…LISF), 114 to 134 (IVSS…LNFL), 137 to 157 (FIIQ…SIIL), 188 to 208 (IIGP…MLLA), and 218 to 238 (LFLI…IYLF).

It belongs to the UPF0259 family.

It is found in the cell membrane. This Buchnera aphidicola subsp. Acyrthosiphon pisum (strain Tuc7) protein is UPF0259 membrane protein BUAPTUC7_273.